Reading from the N-terminus, the 292-residue chain is MFTGSIVALVTPMDDKGNVCRSSLKKLIDYHVASGTSAIVSVGTTGESATLSHDEHGDVVMMTLELADGRIPVIAGTGANATAEAISLTQRFNDSGVVGCLTVTPYYNRPTQEGLYQHFKAIAEHTDLPQILYNVPSRTGCDMLPETVGRLAKVKNIVAIKEATGNLSRVHQIKELVSDDFLLLSGDDATGLDFMQLGGHGVISVTANVAARDMAEMCRLAAEGQFAEARVINQRLMPLHNKLFVEPNPIPVKWACKELGLVATDTLRLPMTPITDNGKEIVRAALKHAGLL.

Pyruvate is bound at residue threonine 45. Tyrosine 133 serves as the catalytic Proton donor/acceptor. Lysine 161 serves as the catalytic Schiff-base intermediate with substrate. Residue isoleucine 203 coordinates pyruvate.

Belongs to the DapA family. As to quaternary structure, homotetramer; dimer of dimers.

Its subcellular location is the cytoplasm. The catalysed reaction is L-aspartate 4-semialdehyde + pyruvate = (2S,4S)-4-hydroxy-2,3,4,5-tetrahydrodipicolinate + H2O + H(+). The protein operates within amino-acid biosynthesis; L-lysine biosynthesis via DAP pathway; (S)-tetrahydrodipicolinate from L-aspartate: step 3/4. Functionally, catalyzes the condensation of (S)-aspartate-beta-semialdehyde [(S)-ASA] and pyruvate to 4-hydroxy-tetrahydrodipicolinate (HTPA). The chain is 4-hydroxy-tetrahydrodipicolinate synthase from Escherichia fergusonii (strain ATCC 35469 / DSM 13698 / CCUG 18766 / IAM 14443 / JCM 21226 / LMG 7866 / NBRC 102419 / NCTC 12128 / CDC 0568-73).